The following is a 310-amino-acid chain: Putative sugar kinase PH1459 (310 aa).

Residues K194, T219, and G224 each coordinate ATP.

It belongs to the carbohydrate kinase PfkB family.

The chain is Putative sugar kinase PH1459 from Pyrococcus horikoshii (strain ATCC 700860 / DSM 12428 / JCM 9974 / NBRC 100139 / OT-3).